Here is a 422-residue protein sequence, read N- to C-terminus: MDPRQSRITELAIAIKKQTETLQSLLDSLKVATPSFSVNANQELPRNAAVQLAQSSILDSCTELQDLVEGPLAHVGRIMSPRVHISSALQAIVHFNIAEKIAKHETISFGEIAKRCKMDVDDVKRIMRLAISYRIFKESHIGFVNHTASSFLIAENLLVRQWISLCCDEFIPAGSFLVPAMKKWPSSEEPNETAFALLHKGDSLWEVLKKQPEKAQRFAHGMEYMRTLPPFDINHLFTSLNWEIDCEMVLVDVGGSQGSIAEALLRRHPRLRCYVQDLPETLSKAVVPKDLKGRLEFVSHSMFKEQPIKADVYLLRSILHDWLDGYALQIIRNLIPALEVGSKVIINEICLPEPNAISAYEAQLIRGYDLSMKQQFNSKERDVHEWETLFRLADRRFKLNRIVNPPGSFLAVLEFEWQPTTP.

Asp-277 provides a ligand contact to S-adenosyl-L-methionine. The active-site Proton acceptor is His-320.

Belongs to the class I-like SAM-binding methyltransferase superfamily. Cation-independent O-methyltransferase family.

The protein operates within secondary metabolite biosynthesis. O-methyltransferase; part of the gene cluster that mediates the biosynthesis of KK-1, a novel cyclic depsipeptide with 10 residues which is a promising active compound with high activity against many plant pathogens, especially Botrytis cinerea. Within the pathway, kk1A is responsible for the O-methylation of tyrosine as a free amino acid before its activation as an aminoacyl-AMP by the corresponding A domain of kk1B. The nonribosomal peptide synthetase (NRPS) kk1B catalyzes the elongation and cyclization of the decapeptide chain composed of 1 D-lactic acid residue (D-Lac), 1 pipecolic acid residue (Pip), 1 aspartic acid residue (Asp), 1 isoleucine residue (Ile), 1 glycine residue (Gly), 1 tyrosine residue (Tyr) and 4 valine residues (Val). The Asp, Ile and 3 Val residues are N-methylated by the 5 methyltransferase domains from the NRPS (found in modules 3, 5, 6, 7 and 9), whereas the Tyr residue is O-methylated by the cluster encoded O-methyltransferase kk1A. The thioesterase kk1J is likely to be involved in the corrective mechanism of peptide chain synthesis. The D-lactate dehydrogenase kk1H is involved in the synthesis of D-lactic acid from pyruvic acid, which is recognized by the A domain of the first kk1B module. The pyrroline-5-carboxylate reductase kk1I is involved in the synthesis of the L-pipecolic acid residue of KK-1 from delta-1-pyrroline-5-carboxylate (P5C), a metabolic intermediate of lysine. It is still unclear how kk1C and kk1D are involved in the production of KK-1. This chain is O-methyltransferase kk1A, found in Curvularia clavata.